A 276-amino-acid chain; its full sequence is Large ribosomal subunit protein uL2 (276 aa).

Disordered stretches follow at residues methionine 1–histidine 58 and arginine 218–lysine 276. Residues alanine 16 to serine 27 show a composition bias toward polar residues. Over residues arginine 255 to lysine 276 the composition is skewed to basic residues.

It belongs to the universal ribosomal protein uL2 family. Part of the 50S ribosomal subunit. Forms a bridge to the 30S subunit in the 70S ribosome.

Functionally, one of the primary rRNA binding proteins. Required for association of the 30S and 50S subunits to form the 70S ribosome, for tRNA binding and peptide bond formation. It has been suggested to have peptidyltransferase activity; this is somewhat controversial. Makes several contacts with the 16S rRNA in the 70S ribosome. This chain is Large ribosomal subunit protein uL2, found in Bifidobacterium animalis subsp. lactis (strain AD011).